The following is a 508-amino-acid chain: Chromosomal replication initiator protein DnaA (508 aa).

The domain I, interacts with DnaA modulators stretch occupies residues 1–91 (MADDPGSSFT…TDALSRRLGQ (91 aa)). The interval 91 to 167 (QQIQLGVRIA…AIDPAVAAGT (77 aa)) is domain II. The tract at residues 104–152 (DDVEDALIPSAEPFPDTDADLSARRRTDSRASGERGAVTNTQPGWTNYF) is disordered. Positions 124-136 (LSARRRTDSRASG) are enriched in basic and acidic residues. A compositionally biased stretch (polar residues) spans 141 to 152 (VTNTQPGWTNYF). Residues 168-384 (SLNRRYTFDT…GALIRVTAFA (217 aa)) are domain III, AAA+ region. Gly-212, Gly-214, Lys-215, and Thr-216 together coordinate ATP. Residues 385-508 (SLNKTPIDKS…TTRIRQRSKR (124 aa)) form a domain IV, binds dsDNA region.

It belongs to the DnaA family. As to quaternary structure, oligomerizes as a right-handed, spiral filament on DNA at oriC.

It localises to the cytoplasm. Plays an essential role in the initiation and regulation of chromosomal replication. ATP-DnaA binds to the origin of replication (oriC) to initiate formation of the DNA replication initiation complex once per cell cycle. Binds the DnaA box (a 9 base pair repeat at the origin) and separates the double-stranded (ds)DNA. Forms a right-handed helical filament on oriC DNA; dsDNA binds to the exterior of the filament while single-stranded (ss)DNA is stabiized in the filament's interior. The ATP-DnaA-oriC complex binds and stabilizes one strand of the AT-rich DNA unwinding element (DUE), permitting loading of DNA polymerase. After initiation quickly degrades to an ADP-DnaA complex that is not apt for DNA replication. Binds acidic phospholipids. The chain is Chromosomal replication initiator protein DnaA from Mycobacterium avium.